Consider the following 127-residue polypeptide: Membrane-bound lysozyme inhibitor of C-type lysozyme (127 aa).

The signal sequence occupies residues 1–18; that stretch reads MKKALWLLLAAVPVVLVA. C19 carries N-palmitoyl cysteine lipidation. C19 carries the S-diacylglycerol cysteine lipid modification. Cysteines 51 and 124 form a disulfide.

It belongs to the MliC family. Type 2 subfamily. In terms of assembly, homodimer.

The protein resides in the cell outer membrane. In terms of biological role, specifically inhibits C-type lysozymes. The sequence is that of Membrane-bound lysozyme inhibitor of C-type lysozyme from Pseudomonas aeruginosa (strain ATCC 15692 / DSM 22644 / CIP 104116 / JCM 14847 / LMG 12228 / 1C / PRS 101 / PAO1).